Consider the following 82-residue polypeptide: Small ribosomal subunit protein bS18 (82 aa).

It belongs to the bacterial ribosomal protein bS18 family. As to quaternary structure, part of the 30S ribosomal subunit. Forms a tight heterodimer with protein bS6.

Functionally, binds as a heterodimer with protein bS6 to the central domain of the 16S rRNA, where it helps stabilize the platform of the 30S subunit. In Bartonella bacilliformis (strain ATCC 35685 / KC583 / Herrer 020/F12,63), this protein is Small ribosomal subunit protein bS18.